The primary structure comprises 157 residues: SsrA-binding protein (157 aa).

The segment at Leu133–Gly157 is disordered. Over residues Asp135–Gly157 the composition is skewed to basic and acidic residues.

Belongs to the SmpB family.

Its subcellular location is the cytoplasm. Functionally, required for rescue of stalled ribosomes mediated by trans-translation. Binds to transfer-messenger RNA (tmRNA), required for stable association of tmRNA with ribosomes. tmRNA and SmpB together mimic tRNA shape, replacing the anticodon stem-loop with SmpB. tmRNA is encoded by the ssrA gene; the 2 termini fold to resemble tRNA(Ala) and it encodes a 'tag peptide', a short internal open reading frame. During trans-translation Ala-aminoacylated tmRNA acts like a tRNA, entering the A-site of stalled ribosomes, displacing the stalled mRNA. The ribosome then switches to translate the ORF on the tmRNA; the nascent peptide is terminated with the 'tag peptide' encoded by the tmRNA and targeted for degradation. The ribosome is freed to recommence translation, which seems to be the essential function of trans-translation. This chain is SsrA-binding protein, found in Methylobacterium sp. (strain 4-46).